The following is a 26-amino-acid chain: uncharacterized protein (26 aa).

It is found in the plastid. It localises to the chloroplast. This is an uncharacterized protein from Trieres chinensis (Marine centric diatom).